Reading from the N-terminus, the 251-residue chain is Probable transcriptional regulatory protein PMI1113 (251 aa).

This sequence belongs to the TACO1 family.

The protein resides in the cytoplasm. This chain is Probable transcriptional regulatory protein PMI1113, found in Proteus mirabilis (strain HI4320).